We begin with the raw amino-acid sequence, 63 residues long: uncharacterized protein (63 aa).

Residues 15 to 37 form a helical membrane-spanning segment; that stretch reads ISHCHLPLSPATAIAIIICFRIV.

Its subcellular location is the membrane. This is an uncharacterized protein from Saccharomyces cerevisiae (strain ATCC 204508 / S288c) (Baker's yeast).